A 297-amino-acid polypeptide reads, in one-letter code: Quinate/shikimate dehydrogenase (297 aa).

Lys-80 and Asp-116 together coordinate substrate. Residues Ala-141–Ala-144, Asn-164–Asp-167, Lys-214, Cys-241–Asn-244, and Gly-264 each bind NAD(+).

It belongs to the shikimate dehydrogenase family. As to quaternary structure, homodimer.

The enzyme catalyses L-quinate + NAD(+) = 3-dehydroquinate + NADH + H(+). The catalysed reaction is L-quinate + NADP(+) = 3-dehydroquinate + NADPH + H(+). It carries out the reaction shikimate + NADP(+) = 3-dehydroshikimate + NADPH + H(+). It catalyses the reaction shikimate + NAD(+) = 3-dehydroshikimate + NADH + H(+). Its pathway is metabolic intermediate biosynthesis; chorismate biosynthesis; chorismate from D-erythrose 4-phosphate and phosphoenolpyruvate: step 4/7. Its function is as follows. The actual biological function of YdiB remains unclear, nor is it known whether 3-dehydroshikimate or quinate represents the natural substrate. Catalyzes the reversible NAD-dependent reduction of both 3-dehydroshikimate (DHSA) and 3-dehydroquinate to yield shikimate (SA) and quinate, respectively. It can use both NAD or NADP for catalysis, however it has higher catalytic efficiency with NAD. The chain is Quinate/shikimate dehydrogenase from Shigella dysenteriae serotype 1 (strain Sd197).